Consider the following 226-residue polypeptide: Pathogenesis-related protein R major form (226 aa).

The first 25 residues, 1 to 25 (MNFLKSFPFFAFLYFGQYFVAVTHA), serve as a signal peptide directing secretion. Disulfide bonds link cysteine 34-cysteine 225, cysteine 75-cysteine 85, cysteine 90-cysteine 96, cysteine 140-cysteine 214, cysteine 145-cysteine 197, cysteine 153-cysteine 163, cysteine 167-cysteine 176, and cysteine 177-cysteine 184.

This sequence belongs to the thaumatin family.

The protein localises to the vacuole. The sequence is that of Pathogenesis-related protein R major form from Nicotiana tabacum (Common tobacco).